Reading from the N-terminus, the 251-residue chain is Triosephosphate isomerase (251 aa).

9–11 (NWK) serves as a coordination point for substrate. The active-site Electrophile is the histidine 95. The Proton acceptor role is filled by glutamate 167. Residues glycine 173, serine 213, and 234–235 (GG) each bind substrate.

Belongs to the triosephosphate isomerase family. Homodimer.

The protein localises to the cytoplasm. The catalysed reaction is D-glyceraldehyde 3-phosphate = dihydroxyacetone phosphate. It participates in carbohydrate biosynthesis; gluconeogenesis. Its pathway is carbohydrate degradation; glycolysis; D-glyceraldehyde 3-phosphate from glycerone phosphate: step 1/1. In terms of biological role, involved in the gluconeogenesis. Catalyzes stereospecifically the conversion of dihydroxyacetone phosphate (DHAP) to D-glyceraldehyde-3-phosphate (G3P). This Lactobacillus gasseri (strain ATCC 33323 / DSM 20243 / BCRC 14619 / CIP 102991 / JCM 1131 / KCTC 3163 / NCIMB 11718 / NCTC 13722 / AM63) protein is Triosephosphate isomerase.